Reading from the N-terminus, the 205-residue chain is Ribonuclease HII (205 aa).

In terms of domain architecture, RNase H type-2 spans 16-205 (VSEVGIDEVG…KSFLNQSDLI (190 aa)). A divalent metal cation is bound by residues Asp-22, Glu-23, and Asp-118.

It belongs to the RNase HII family. Requires Mn(2+) as cofactor. Mg(2+) serves as cofactor.

It localises to the cytoplasm. The enzyme catalyses Endonucleolytic cleavage to 5'-phosphomonoester.. In terms of biological role, endonuclease that specifically degrades the RNA of RNA-DNA hybrids. This Prochlorococcus marinus (strain MIT 9312) protein is Ribonuclease HII.